The sequence spans 505 residues: Aspartyl/glutamyl-tRNA(Asn/Gln) amidotransferase subunit B (505 aa).

Belongs to the GatB/GatE family. GatB subfamily. As to quaternary structure, heterotrimer of A, B and C subunits.

The enzyme catalyses L-glutamyl-tRNA(Gln) + L-glutamine + ATP + H2O = L-glutaminyl-tRNA(Gln) + L-glutamate + ADP + phosphate + H(+). The catalysed reaction is L-aspartyl-tRNA(Asn) + L-glutamine + ATP + H2O = L-asparaginyl-tRNA(Asn) + L-glutamate + ADP + phosphate + 2 H(+). Functionally, allows the formation of correctly charged Asn-tRNA(Asn) or Gln-tRNA(Gln) through the transamidation of misacylated Asp-tRNA(Asn) or Glu-tRNA(Gln) in organisms which lack either or both of asparaginyl-tRNA or glutaminyl-tRNA synthetases. The reaction takes place in the presence of glutamine and ATP through an activated phospho-Asp-tRNA(Asn) or phospho-Glu-tRNA(Gln). In Dinoroseobacter shibae (strain DSM 16493 / NCIMB 14021 / DFL 12), this protein is Aspartyl/glutamyl-tRNA(Asn/Gln) amidotransferase subunit B.